The sequence spans 496 residues: Protein RepR (496 aa).

The DNA-binding element occupies 120–141 (SDILTTAIDLGFMPTLIIKSDK).

Its function is as follows. Essential for replication. This is Protein RepR (repR) from Streptococcus agalactiae.